Consider the following 237-residue polypeptide: MQLTEQQHDKLSKVQLDESWKHSLAEFLVSSRMDELRQFLIEQKNQDKVIYPPSKQIFNALNTTPLSAVKVVILGQDPYHGPNQANGLSFSVQKGIVLPPSLRNIFHELNTDLGIPVPKHGDLTKWADQGVLLLNSVLTVEAGQPTSHQKRGWEQFTDSIIDVLNEQREHVVFILWGAYAQRKGQRIDREKHLVLKAAHPSPLAANRGGFFGCKVFSKTNNYLKQHGIEPIDWQLDA.

Asp-77 functions as the Proton acceptor in the catalytic mechanism.

The protein belongs to the uracil-DNA glycosylase (UDG) superfamily. UNG family.

The protein localises to the cytoplasm. The catalysed reaction is Hydrolyzes single-stranded DNA or mismatched double-stranded DNA and polynucleotides, releasing free uracil.. Excises uracil residues from the DNA which can arise as a result of misincorporation of dUMP residues by DNA polymerase or due to deamination of cytosine. This chain is Uracil-DNA glycosylase, found in Acinetobacter baylyi (strain ATCC 33305 / BD413 / ADP1).